The primary structure comprises 169 residues: Ribosome maturation factor RimM (169 aa).

One can recognise a PRC barrel domain in the interval 94-168 (DDEFYHADLI…RIVADPPEGL (75 aa)).

It belongs to the RimM family. In terms of assembly, binds ribosomal protein uS19.

It localises to the cytoplasm. Its function is as follows. An accessory protein needed during the final step in the assembly of 30S ribosomal subunit, possibly for assembly of the head region. Essential for efficient processing of 16S rRNA. May be needed both before and after RbfA during the maturation of 16S rRNA. It has affinity for free ribosomal 30S subunits but not for 70S ribosomes. This Cereibacter sphaeroides (strain ATCC 17023 / DSM 158 / JCM 6121 / CCUG 31486 / LMG 2827 / NBRC 12203 / NCIMB 8253 / ATH 2.4.1.) (Rhodobacter sphaeroides) protein is Ribosome maturation factor RimM.